The primary structure comprises 362 residues: Endopolygalacturonase II (362 aa).

The first 20 residues, 1–20 (MHSFASLLRYGLAAGATLAS), serve as a signal peptide directing secretion. Positions 21–27 (ASPIEAR) are excised as a propeptide. C30 and C45 are disulfide-bonded. Residues 156-186 (SDDITLTDITINNADGDSLGGHNTDAFDVGN) form a PbH1 1 repeat. D201 functions as the Proton donor in the catalytic mechanism. A disulfide bridge links C203 with C219. 4 PbH1 repeats span residues 209–229 (GENI…SIGS), 238–259 (VKNV…RIKT), 267–289 (VSEI…VIQQ), and 301–322 (TNGV…DSKA). Residue H223 is part of the active site. An N-linked (GlcNAc...) asparagine glycan is attached at N240. Cystine bridges form between C329-C334 and C353-C362.

This sequence belongs to the glycosyl hydrolase 28 family.

It is found in the secreted. The catalysed reaction is (1,4-alpha-D-galacturonosyl)n+m + H2O = (1,4-alpha-D-galacturonosyl)n + (1,4-alpha-D-galacturonosyl)m.. In terms of biological role, involved in maceration and soft-rotting of plant tissue. Hydrolyzes the 1,4-alpha glycosidic bonds of de-esterified pectate in the smooth region of the plant cell wall. The polypeptide is Endopolygalacturonase II (pgaII) (Aspergillus awamori (Black koji mold)).